The chain runs to 1571 residues: Phosphatidylinositol 3-kinase 1 (1571 aa).

Residues 1–73 show a composition bias toward low complexity; the sequence is MNSIESSSND…NNDNNNNNNN (73 aa). Disordered regions lie at residues 1–119, 157–195, and 283–430; these read MNSI…HVNN, GYDV…RTRN, and NSKL…IIKR. Residues 74 to 85 show a composition bias toward basic and acidic residues; it reads IDKKRKDSKNKQ. Residues 101-119 are compositionally biased toward low complexity; that stretch reads NSNDSNCSSGSSSGGHVNN. Positions 283-292 are enriched in basic and acidic residues; it reads NSKLDTEEKP. Over residues 294 to 324 the composition is skewed to low complexity; that stretch reads TTTTTTTTTSTSISTSTPTTTTTTTTNTSTT. The span at 325 to 337 shows a compositional bias: polar residues; the sequence is NDITIKPKTSPTK. Composition is skewed to low complexity over residues 360 to 382 and 405 to 424; these read KVST…PTGK and NNTN…NNNN. The region spanning 530–627 is the PI3K-ABD domain; it reads IKTSFNILFL…IPKLKVIEKS (98 aa). The PI3K-RBD domain occupies 700-789; the sequence is GNKILISIFL…GTKPQLTLIQ (90 aa). The C2 PI3K-type domain occupies 851–1020; sequence IKKPFRVKVM…GLTLEFEEFN (170 aa). The 177-residue stretch at 1040–1216 folds into the PIK helical domain; that stretch reads QPPTNINSNE…GILLESYLYA (177 aa). The PI3K/PI4K catalytic domain maps to 1280–1558; sequence IINKSKYMDS…LIHESLATKT (279 aa). Residues 1286 to 1292 are G-loop; that stretch reads YMDSKKL. The segment at 1424 to 1432 is catalytic loop; that stretch reads GIGDRHNDN. An activation loop region spans residues 1443 to 1469; sequence HIDFGHFLGNYKKKFGFKRERAPFVFT.

Belongs to the PI3/PI4-kinase family.

It catalyses the reaction a 1,2-diacyl-sn-glycero-3-phospho-(1D-myo-inositol) + ATP = a 1,2-diacyl-sn-glycero-3-phospho-(1D-myo-inositol-3-phosphate) + ADP + H(+). This Dictyostelium discoideum (Social amoeba) protein is Phosphatidylinositol 3-kinase 1 (pikA).